Consider the following 808-residue polypeptide: Beta-catenin/armadillo-related protein 1 (808 aa).

The segment at 1 to 85 is involved in transcriptional activation; it reads MDLDPNLVIN…SSHLSGMSSM (85 aa). ARM repeat units follow at residues 118–160, 165–209, and 369–408; these read RAIP…NETK, CVIF…RAIS, and SDVPSKMKEELLLKSLLELVNSRNAVIRLYSAQTMSNLVA. The segment at 541 to 808 is involved in transcriptional activation; that stretch reads NVQDVIEGVR…DQYPYRQGRF (268 aa). Residues 702-808 are disordered; sequence TYEGAGEQWS…DQYPYRQGRF (107 aa). Over residues 723–736 the composition is skewed to polar residues; it reads YCNSSGRDSSKTYN. Low complexity predominate over residues 737-750; that stretch reads SPMYHSPPSMYPEY. Over residues 786–798 the composition is skewed to polar residues; that stretch reads NIPSNQGPSSHLS.

It belongs to the beta-catenin family. Interacts with apr-1, axl-1, daf-16, lin-23, and pop-1 (via acidic region in N-terminus 1-44). Interacts (via ARM repeats) with pry-1.

It is found in the cytoplasm. The protein resides in the nucleus. It localises to the membrane. The protein localises to the cell junction. Its function is as follows. Participates in the Wnt signaling pathway which affects cell fate and may regulate the stem cell divisions of seam cells during larval development. Functions as a transcriptional activator but is dependent on the interaction with pop-1. Involved in maintaining lin-39 Hox expression and regulating glr-1 abundance at the synapses. Required for mab-5 expression during Q neuroblast migration and for oxidative stress-induced daf-16 signaling. Has roles in egg laying, vulva precursor cell fate determination, Q neuroblast migration, posterior ectodermal cell P12 specification, movement, body length, male tail development and dauer induction. Functionally redundant to wrm-1 and hmp-2. The sequence is that of Beta-catenin/armadillo-related protein 1 (bar-1) from Caenorhabditis briggsae.